The sequence spans 358 residues: Bis(monoacylglycero)phosphate synthase CLN5 (358 aa).

Residues 1–23 (MAQEVDTAQGAEMRRGAGAARGR) are Cytoplasmic-facing. Residues 24–40 (ASWCWALALLWLAVVPG) form a helical; Signal-anchor for type II membrane protein membrane-spanning segment. The Lumenal portion of the chain corresponds to 41–358 (WSRVSGIPSR…PIRNKTLSGL (318 aa)). Intrachain disulfides connect C70–C159 and C77–C165. H117 acts as the Proton acceptor in catalysis. N-linked (GlcNAc...) asparagine glycosylation is found at N130, N143, N178, and N203. The active-site Nucleophile; Acyl-thioester intermediate is the C231. 3 N-linked (GlcNAc...) asparagine glycosylation sites follow: N255, N271, and N281. A membrane-anchoring region spans residues 304-343 (FLLSLLQIFDAVIVHKQFYLFYNFEYWFLPMKFPFIKITY). N352 carries an N-linked (GlcNAc...) asparagine glycan.

The protein belongs to the CLN5 family. Multimer. Interacts with SORT1, RAB5A and RAB7A. Interacts with PPT1, TPP1, CLN3, CLN6, CLN8, ATP5F1A and ATP5F1B. Post-translationally, N-glycosylated with both high mannose and complex type sugars. Glycosylation is important for proper folding and trafficking to the lysosomes. The type II membrane signal anchor is proteolytically cleaved to produce a mature form that is transported to the lysosomes (Bis(monoacylglycero)phosphate synthase CLN5, secreted form). In terms of processing, can undergo proteolytic cleavage at the C-terminus, probably by a cysteine protease and may involve the removal of approximately 10-15 residues from the C-terminal end. As to expression, ubiquitous.

It localises to the lysosome. It is found in the membrane. It catalyses the reaction S-hexadecanoyl-L-cysteinyl-[protein] + H2O = L-cysteinyl-[protein] + hexadecanoate + H(+). The catalysed reaction is 2 1-acyl-sn-glycero-3-phospho-(1'-sn-glycerol) = 1-acyl-sn-glycero-3-phospho-(3'-acyl-sn-1'-glycerol) + sn-glycero-3-phospho-(1'-sn-glycerol). It carries out the reaction 2 1-(9Z-octadecenoyl)-sn-glycero-3-phospho-(1'-sn-glycerol) = 1-(9Z-octadecenoyl)-sn-glycero-3-phospho-(3'-(9Z-octadecenoyl)-1'-sn-glycerol) + sn-glycero-3-phospho-(1'-sn-glycerol). The enzyme catalyses 2 1-octadecanoyl-sn-glycero-3-phospho-(1'-sn-glycerol) = 1-octadecanoyl-sn-glycero-3-phospho-(3'-octadecanoyl-1'-sn-glycerol) + sn-glycero-3-phospho-(1'-sn-glycerol). It catalyses the reaction 2 1-hexadecanoyl-sn-glycero-3-phospho-(1'-sn-glycerol) = 1-hexadecanoyl-sn-glycero-3-phospho-(3'-hexadecanoyl-1'-sn-glycerol) + sn-glycero-3-phospho-(1'-sn-glycerol). The catalysed reaction is 2 1-tetradecanoyl-sn-glycero-3-phospho-(1'-sn-glycerol) = 1-tetradecanoyl-sn-glycero-3-phospho-(3'-tetradecanoyl-1'-sn-glycerol) + sn-glycero-3-phospho-(1'-sn-glycerol). Its activity is regulated as follows. Anionic phospholipids activate bis(monoacylglycero)phosphate (BMP) synthase activity. Amiodarone, a cationic amphiphilic drug inhibits BMP synthase activity towards liposomal lysophosphatidylglycerol. Palmostatin B inhibits palmitoyl protein thioesterase activity. In terms of biological role, catalyzes the synthesis of bis(monoacylglycero)phosphate (BMP) via transacylation of 2 molecules of lysophosphatidylglycerol (LPG). BMP also known as lysobisphosphatidic acid plays a key role in the formation of intraluminal vesicles and in maintaining intracellular cholesterol homeostasis. Can use only LPG as the exclusive lysophospholipid acyl donor for base exchange and displays BMP synthase activity towards various LPGs (LPG 14:0, LPG 16:0, LPG 18:0, LPG 18:1) with a higher preference for longer chain lengths. Plays a role in influencing the retrograde trafficking of lysosomal sorting receptors SORT1 and IGF2R from the endosomes to the trans-Golgi network by controlling the recruitment of retromer complex to the endosomal membrane. Regulates the localization and activation of RAB7A which is required to recruit the retromer complex to the endosomal membrane. Its function is as follows. Exhibits palmitoyl protein thioesterase (S-depalmitoylation) activity in vitro and most likely plays a role in protein S-depalmitoylation. In Homo sapiens (Human), this protein is Bis(monoacylglycero)phosphate synthase CLN5 (CLN5).